A 184-amino-acid polypeptide reads, in one-letter code: Fruit protein pKIWI501 (184 aa).

Residues 1–184 (MATVEVTPAV…TEVPVDKTEE (184 aa)) form a disordered region. Composition is skewed to low complexity over residues 25-36 (PQEPQPEAAVAA) and 53-65 (PEAV…PAAT). Residues 72–92 (EVAEAEEEVVEEPQEVPEEPV) show a composition bias toward acidic residues. Over residues 96–119 (AAKEVEATEGKAEPTGEMKDKTPE) the composition is skewed to basic and acidic residues. The span at 120–156 (ATDAPEAPAAAEEPTDAPEAPAVAEEPTNAPEAPAVG) shows a compositional bias: low complexity. The span at 159–168 (PEAKEGKPDE) shows a compositional bias: basic and acidic residues.

The protein to H.brasiliensis latex allergen Hev b 5.

This Actinidia deliciosa (Kiwi) protein is Fruit protein pKIWI501.